The sequence spans 495 residues: UDP-glycosyltransferase 73C6 (495 aa).

UDP-alpha-D-glucose contacts are provided by residues S296, 356–358, 373–381, and 395–398; these read SPQ, HCGWNSTLE, and FADQ. Residues 449–475 are disordered; the sequence is SDDAKERRRRAKELGESAHKAVEEGGS. Residues 450–471 are compositionally biased toward basic and acidic residues; it reads DDAKERRRRAKELGESAHKAVE.

This sequence belongs to the UDP-glycosyltransferase family. Expressed in leaves and flowers, and at a very low level in roots.

In terms of biological role, acts as a UDP-glucose:flavonol-3-O-glycoside-7-O-glucosyltransferase. 6- and 7-hydroxyflavone, but not 3- or 5-hydroxyflavone are accepted as substrates. Possesses low quercetin 3-O-glucosyltransferase, 7-O-glucosyltransferase and 4'-O-glucosyltransferase activities in vitro. The protein is UDP-glycosyltransferase 73C6 (UGT73C6) of Arabidopsis thaliana (Mouse-ear cress).